The sequence spans 417 residues: Dibenzothiophene monooxygenase (417 aa).

FMN is bound by residues Y96, 129 to 134, 159 to 163, R282, 369 to 370, and H391; these read NASSEN, KHFCS, and AR. Residues 131 to 142 are lid loop; the sequence is SSENNSHVLDWK.

It belongs to the DszC flavin monooxygenase family. As to quaternary structure, homotetramer. Homodimer. Requires FAD as cofactor. It depends on NADH as a cofactor.

It is found in the cytoplasm. The enzyme catalyses dibenzothiophene + 2 FMNH2 + 2 O2 = dibenzothiophene 5,5-dioxide + 2 FMN + 2 H2O + 2 H(+). It carries out the reaction dibenzothiophene + FMNH2 + O2 = dibenzothiophene 5-oxide + FMN + H2O + H(+). The catalysed reaction is dibenzothiophene 5-oxide + FMNH2 + O2 = dibenzothiophene 5,5-dioxide + FMN + H2O + H(+). It participates in sulfur metabolism; dibenzothiophene degradation. Functionally, catalyzes the first step of the '4S' desulfurization pathway that removes covalently bound sulfur from dibenzothiophene (DBT) without breaking carbon-carbon bonds. Sulfur dioxygenase which converts DBT to DBT-sulfone (DBTO2 or DBT 5,5-dioxide) in a stepwise manner. In DBTO (dibenzothiophene-5-oxide) was reported not to be a substrate, in it is reported to be a substrate. Can also use benzyl sulfide and benzyl sulfoxide as substrates, although benzyl sulfoxide is a poor substrate. The pathway substrate specificity has been augmented using mutagenesis, however no mutations allowed use of alkylated thiophenes. The protein is Dibenzothiophene monooxygenase of Rhodococcus qingshengii.